Reading from the N-terminus, the 76-residue chain is Proteolipid protein 2 (76 aa).

Residues 1-60 (ISGPWSDFFRALGAVILYLMTSIVVLVERGNNSKGAAGVLGLCAAGLFGYDAYITFPSGT) form the MARVEL domain. A helical transmembrane segment spans residues 8–28 (FFRALGAVILYLMTSIVVLVE). A glycan (N-linked (GlcNAc...) asparagine) is linked at asparagine 31. The chain crosses the membrane as a helical span at residues 36 to 56 (AAGVLGLCAAGLFGYDAYITF).

Its subcellular location is the membrane. May play a role in cell differentiation in the intestinal epithelium. The chain is Proteolipid protein 2 (PLP2) from Ovis aries (Sheep).